The sequence spans 699 residues: tRNA(Met) cytidine acetyltransferase TmcA (699 aa).

Residues Gln-179, 201–210, and Arg-323 contribute to the ATP site; that span reads GRGKSTLAGM. An N-acetyltransferase domain is found at 359–543; it reads IEIPLYEQRD…SGCYTAMALL (185 aa). Acetyl-CoA-binding positions include 471 to 473, Glu-511, and Arg-518; that span reads VAV.

It belongs to the RNA cytidine acetyltransferase family. TmcA subfamily.

The protein resides in the cytoplasm. It catalyses the reaction cytidine(34) in elongator tRNA(Met) + acetyl-CoA + ATP + H2O = N(4)-acetylcytidine(34) in elongator tRNA(Met) + ADP + phosphate + CoA + H(+). In terms of biological role, catalyzes the formation of N(4)-acetylcytidine (ac(4)C) at the wobble position of tRNA(Met), by using acetyl-CoA as an acetyl donor and ATP (or GTP). This is tRNA(Met) cytidine acetyltransferase TmcA from Yersinia pestis (strain D106004).